Reading from the N-terminus, the 338-residue chain is Putative pectinesterase 63 (338 aa).

The signal sequence occupies residues 1–24 (MGYNYVSLIVTILLVVITSPVVFG). Substrate contacts are provided by Thr-116 and Gln-151. Asp-174 functions as the Proton donor in the catalytic mechanism. Asp-195 serves as the catalytic Nucleophile. Substrate is bound at residue Arg-252.

Belongs to the pectinesterase family.

Its subcellular location is the secreted. It is found in the cell wall. It carries out the reaction [(1-&gt;4)-alpha-D-galacturonosyl methyl ester](n) + n H2O = [(1-&gt;4)-alpha-D-galacturonosyl](n) + n methanol + n H(+). The protein operates within glycan metabolism; pectin degradation; 2-dehydro-3-deoxy-D-gluconate from pectin: step 1/5. Functionally, acts in the modification of cell walls via demethylesterification of cell wall pectin. The chain is Putative pectinesterase 63 (PME63) from Arabidopsis thaliana (Mouse-ear cress).